The sequence spans 1116 residues: Rho GTPase-activating protein 45 (1116 aa).

A disordered region spans residues 1-72 (MFSRKKRELM…RPTSLSRHAS (72 aa)). Residues 22-31 (GSPNPQSSSG) show a composition bias toward polar residues. Residues Ser23, Ser72, Ser92, and Ser98 each carry the phosphoserine modification. An F-BAR domain is found at 268–538 (EEVDMLLQRC…SSKLYDPGQQ (271 aa)). Residues 375 to 498 (EHERRRKEIK…QIQEVIRQSD (124 aa)) adopt a coiled-coil conformation. The disordered stretch occupies residues 422–457 (VAKAEEEQQGTGPGAGTAASKALDKRRRLEEEAKNK). Positions 448–457 (RRLEEEAKNK) are enriched in basic and acidic residues. 4 positions are modified to phosphoserine: Ser568, Ser577, Ser591, and Ser618. Positions 569–658 (PIMRTRKGSF…MSSSEELGDQ (90 aa)) are disordered. A compositionally biased stretch (polar residues) spans 621 to 635 (ISISDTEVGLDTSSG). A compositionally biased stretch (low complexity) spans 643–652 (TSSSGTMSSS). The segment at 699–744 (THRLRKLRTPAKCRECNSYVYFQGAECEECCLACHKKCLETLAIQC) adopts a Phorbol-ester/DAG-type zinc-finger fold. Positions 758–971 (QDFSQAALST…TLIVHYGLVF (214 aa)) constitute a Rho-GAP domain. Phosphoserine occurs at positions 946, 1017, 1020, and 1022. 2 disordered regions span residues 1004–1035 (EEAEDGSRESHAASNDSDSELEDASDPLSSSD) and 1050–1116 (AGLE…PQFV). Composition is skewed to polar residues over residues 1080–1090 (FNTNQSNNTSR) and 1105–1116 (GGTSQERQPQFV).

It localises to the cytoplasm. It is found in the cell projection. Its subcellular location is the ruffle membrane. Contains a GTPase activator for the Rho-type GTPases (RhoGAP) domain that would be able to negatively regulate the actin cytoskeleton as well as cell spreading. However, also contains N-terminally a BAR-domin which is able to play an autoinhibitory effect on this RhoGAP activity. The protein is Rho GTPase-activating protein 45 of Mus musculus (Mouse).